The primary structure comprises 347 residues: Protein RecA (347 aa).

67-74 (GPESSGKT) serves as a coordination point for ATP.

This sequence belongs to the RecA family.

The protein localises to the cytoplasm. Functionally, can catalyze the hydrolysis of ATP in the presence of single-stranded DNA, the ATP-dependent uptake of single-stranded DNA by duplex DNA, and the ATP-dependent hybridization of homologous single-stranded DNAs. It interacts with LexA causing its activation and leading to its autocatalytic cleavage. This is Protein RecA from Sulfurovum sp. (strain NBC37-1).